A 525-amino-acid chain; its full sequence is Apolipoprotein N-acyltransferase 2 (525 aa).

The next 6 membrane-spanning stretches (helical) occupy residues 25 to 45 (ILNF…YYAL), 56 to 76 (FLYG…LAFF), 81 to 101 (IFTL…FGFL), 115 to 135 (FFFA…FLAY), 153 to 173 (FVDI…AACL), and 200 to 220 (LIFT…ILSI). The region spanning 228-486 (LNTVIVQQNT…AESVYTEVPV (259 aa)) is the CN hydrolase domain. E274 (proton acceptor) is an active-site residue. K339 is a catalytic residue. C397 (nucleophile) is an active-site residue. A helical membrane pass occupies residues 495-515 (ASYKDWLPIMMFLILIFNIFL).

The protein belongs to the CN hydrolase family. Apolipoprotein N-acyltransferase subfamily.

It is found in the cell inner membrane. The enzyme catalyses N-terminal S-1,2-diacyl-sn-glyceryl-L-cysteinyl-[lipoprotein] + a glycerophospholipid = N-acyl-S-1,2-diacyl-sn-glyceryl-L-cysteinyl-[lipoprotein] + a 2-acyl-sn-glycero-3-phospholipid + H(+). The protein operates within protein modification; lipoprotein biosynthesis (N-acyl transfer). Its function is as follows. Catalyzes the phospholipid dependent N-acylation of the N-terminal cysteine of apolipoprotein, the last step in lipoprotein maturation. The polypeptide is Apolipoprotein N-acyltransferase 2 (Treponema denticola (strain ATCC 35405 / DSM 14222 / CIP 103919 / JCM 8153 / KCTC 15104)).